The primary structure comprises 173 residues: C-phycocyanin-3 beta subunit (173 aa).

Asn-73 carries the post-translational modification N4-methylasparagine. (2R,3E)-phycocyanobilin-binding residues include Cys-83 and Cys-154.

This sequence belongs to the phycobiliprotein family. Heterodimer of an alpha and a beta subunit, which further assembles into trimers and the trimers into hexamers. Post-translationally, contains two covalently linked bilin chromophores.

It localises to the cellular thylakoid membrane. Its function is as follows. Light-harvesting photosynthetic bile pigment-protein from the phycobiliprotein complex (phycobilisome, PBS). Phycocyanin is the major phycobiliprotein in the PBS rod. In Microchaete diplosiphon (Fremyella diplosiphon), this protein is C-phycocyanin-3 beta subunit (cpcB3).